The chain runs to 202 residues: uncharacterized protein (202 aa).

This is an uncharacterized protein from Archaeoglobus fulgidus (strain ATCC 49558 / DSM 4304 / JCM 9628 / NBRC 100126 / VC-16).